The chain runs to 1368 residues: Cingulin (1368 aa).

Positions 9 to 378 (MADQHIPVGQ…KQQRTVQSEF (370 aa)) are interaction with TJP3/ZO3 and myosin. Residues 9 to 435 (MADQHIPVGQ…EKLPSLQVQP (427 aa)) form a head region. Residues 41–55 (QDSYGVAVRVQGIDG) carry the ZIM motif. Disordered stretches follow at residues 71 to 264 (FGVQ…TKPL), 278 to 312 (GQVRGRTARRSQALKDERKRSQSLDGRKNYHDTAD), 1053 to 1080 (SRKEIGEAQKQAKEKTAEAERHQFNSSR), 1163 to 1183 (NRSRDQMEQQRAELNQERSRG), and 1308 to 1368 (QQEI…TSSC). Residues 83-97 (NASNTSPPNYQNYSS) are compositionally biased toward polar residues. The tract at residues 101 to 294 (GPSRSISSES…ARRSQALKDE (194 aa)) is interaction with F-actin. 2 stretches are compositionally biased toward low complexity: residues 116 to 132 (PYGSRGYRPSSSHYSSA) and 200 to 211 (SQSSRDSAWSRS). The segment at 150–295 (SSLPRPLQAS…RRSQALKDER (146 aa)) is interaction with TJP2/ZO2. The segment covering 228 to 256 (SATSQQSTSVSNKTKKNGLSTSSPSNQSN) has biased composition (polar residues). Basic and acidic residues predominate over residues 290 to 312 (ALKDERKRSQSLDGRKNYHDTAD). The tract at residues 377–1368 (EFQLKSTPDL…TESNLQTSSC (992 aa)) is interaction with myosin. A coiled-coil region spans residues 436–1330 (GEDTISLGSQ…VMEKESKRKP (895 aa)). A compositionally biased stretch (basic and acidic residues) spans 1320 to 1338 (KVMEKESKRKPIRPAHDDD). The tract at residues 1331–1368 (IRPAHDDDLSSDGEFGGPYDPSSITSLLTESNLQTSSC) is tail. The span at 1352 to 1368 (SSITSLLTESNLQTSSC) shows a compositional bias: polar residues.

The protein belongs to the cingulin family. Parallel homodimer. Interacts with TJP1/ZO1 and TJP2/ZO2 in vivo, and TJP3/ZO3, myosin and OCLN in vitro, possibly directly. Acts as an F-actin bundling protein in vitro. In terms of tissue distribution, localized on the cytoplasmic face of tight junctions of polarized epithelia and some endothelia.

The protein resides in the cell junction. The protein localises to the tight junction. Its function is as follows. Probably plays a role in the formation and regulation of the tight junction (TJ) paracellular permeability barrier, possibly by linking ZO proteins to the actomyosin cytoskeleton. The chain is Cingulin from Xenopus laevis (African clawed frog).